Here is a 1589-residue protein sequence, read N- to C-terminus: Mediator of RNA polymerase II transcription subunit 23 (1589 aa).

A disordered region spans residues 1381 to 1499; sequence YVSQNEPAPP…PPTPAPMHHQ (119 aa). Residues 1392 to 1410 show a composition bias toward basic and acidic residues; sequence TPEREKTPERKDQQKEQQE. Low complexity predominate over residues 1457–1470; the sequence is LHHQQQQQQHLSQM.

It belongs to the Mediator complex subunit 23 family. As to quaternary structure, component of the Mediator complex.

Its subcellular location is the nucleus. Functionally, component of the Mediator complex, a coactivator involved in the regulated transcription of nearly all RNA polymerase II-dependent genes. Mediator functions as a bridge to convey information from gene-specific regulatory proteins to the basal RNA polymerase II transcription machinery. Mediator is recruited to promoters by direct interactions with regulatory proteins and serves as a scaffold for the assembly of a functional preinitiation complex with RNA polymerase II and the general transcription factors. In Caenorhabditis briggsae, this protein is Mediator of RNA polymerase II transcription subunit 23 (sur-2).